We begin with the raw amino-acid sequence, 160 residues long: Large ribosomal subunit protein uL15 (160 aa).

Over residues 1-11 (MKLNELRDNHG) the composition is skewed to basic and acidic residues. Residues 1 to 39 (MKLNELRDNHGARPKSKRLGRGIGSGKGKTSGKGVKGQK) form a disordered region. Positions 21-35 (RGIGSGKGKTSGKGV) are enriched in gly residues.

Belongs to the universal ribosomal protein uL15 family. Part of the 50S ribosomal subunit.

Binds to the 23S rRNA. The protein is Large ribosomal subunit protein uL15 of Granulibacter bethesdensis (strain ATCC BAA-1260 / CGDNIH1).